The sequence spans 82 residues: Small ribosomal subunit protein uS17 (82 aa).

This sequence belongs to the universal ribosomal protein uS17 family. As to quaternary structure, part of the 30S ribosomal subunit.

Functionally, one of the primary rRNA binding proteins, it binds specifically to the 5'-end of 16S ribosomal RNA. The polypeptide is Small ribosomal subunit protein uS17 (Rhodopseudomonas palustris (strain BisA53)).